A 128-amino-acid chain; its full sequence is Aspartate 1-decarboxylase (128 aa).

Catalysis depends on Ser25, which acts as the Schiff-base intermediate with substrate; via pyruvic acid. Residue Ser25 is modified to Pyruvic acid (Ser). A substrate-binding site is contributed by Thr57. The active-site Proton donor is Tyr58. Position 73–75 (73–75 (GSA)) interacts with substrate.

The protein belongs to the PanD family. In terms of assembly, heterooctamer of four alpha and four beta subunits. Pyruvate serves as cofactor. In terms of processing, is synthesized initially as an inactive proenzyme, which is activated by self-cleavage at a specific serine bond to produce a beta-subunit with a hydroxyl group at its C-terminus and an alpha-subunit with a pyruvoyl group at its N-terminus.

Its subcellular location is the cytoplasm. The catalysed reaction is L-aspartate + H(+) = beta-alanine + CO2. It participates in cofactor biosynthesis; (R)-pantothenate biosynthesis; beta-alanine from L-aspartate: step 1/1. Functionally, catalyzes the pyruvoyl-dependent decarboxylation of aspartate to produce beta-alanine. The sequence is that of Aspartate 1-decarboxylase from Paraburkholderia xenovorans (strain LB400).